Here is a 371-residue protein sequence, read N- to C-terminus: Queuine tRNA-ribosyltransferase (371 aa).

Catalysis depends on Asp90, which acts as the Proton acceptor. Substrate is bound by residues Asp90–Phe94, Asp144, Gln185, and Gly212. An RNA binding region spans residues Gly243–Asp249. Catalysis depends on Asp262, which acts as the Nucleophile. Residues Thr267–Arg271 are RNA binding; important for wobble base 34 recognition. Residues Cys300, Cys302, Cys305, and His331 each coordinate Zn(2+).

This sequence belongs to the queuine tRNA-ribosyltransferase family. Homodimer. Within each dimer, one monomer is responsible for RNA recognition and catalysis, while the other monomer binds to the replacement base PreQ1. It depends on Zn(2+) as a cofactor.

It catalyses the reaction 7-aminomethyl-7-carbaguanine + guanosine(34) in tRNA = 7-aminomethyl-7-carbaguanosine(34) in tRNA + guanine. It participates in tRNA modification; tRNA-queuosine biosynthesis. Functionally, catalyzes the base-exchange of a guanine (G) residue with the queuine precursor 7-aminomethyl-7-deazaguanine (PreQ1) at position 34 (anticodon wobble position) in tRNAs with GU(N) anticodons (tRNA-Asp, -Asn, -His and -Tyr). Catalysis occurs through a double-displacement mechanism. The nucleophile active site attacks the C1' of nucleotide 34 to detach the guanine base from the RNA, forming a covalent enzyme-RNA intermediate. The proton acceptor active site deprotonates the incoming PreQ1, allowing a nucleophilic attack on the C1' of the ribose to form the product. After dissociation, two additional enzymatic reactions on the tRNA convert PreQ1 to queuine (Q), resulting in the hypermodified nucleoside queuosine (7-(((4,5-cis-dihydroxy-2-cyclopenten-1-yl)amino)methyl)-7-deazaguanosine). This chain is Queuine tRNA-ribosyltransferase, found in Acidithiobacillus ferrooxidans (strain ATCC 23270 / DSM 14882 / CIP 104768 / NCIMB 8455) (Ferrobacillus ferrooxidans (strain ATCC 23270)).